The chain runs to 223 residues: Ribonuclease 3 (223 aa).

The region spanning 4–127 is the RNase III domain; it reads LENLQKLLGY…VMGAVYLEAG (124 aa). Position 40 (glutamate 40) interacts with Mg(2+). Aspartate 44 is an active-site residue. Mg(2+)-binding residues include aspartate 113 and glutamate 116. The active site involves glutamate 116. A DRBM domain is found at 154 to 223; it reads DYKTALQEIT…AKIALEKMKK (70 aa).

This sequence belongs to the ribonuclease III family. Homodimer. It depends on Mg(2+) as a cofactor.

Its subcellular location is the cytoplasm. It carries out the reaction Endonucleolytic cleavage to 5'-phosphomonoester.. Its function is as follows. Digests double-stranded RNA. Involved in the processing of primary rRNA transcript to yield the immediate precursors to the large and small rRNAs (23S and 16S). Processes some mRNAs, and tRNAs when they are encoded in the rRNA operon. Processes pre-crRNA and tracrRNA of type II CRISPR loci if present in the organism. The chain is Ribonuclease 3 from Campylobacter curvus (strain 525.92).